The sequence spans 372 residues: Partitioning defective 6 homolog beta (372 aa).

Phosphoserine is present on S11. Residues 16–96 (TMEVKSKFGA…PLLRIFIQKK (81 aa)) form the PB1 domain. The interval 126 to 253 (RKKPHIVISM…ITVRPANQRN (128 aa)) is interaction with PARD3 and CDC42. One can recognise a Pseudo-CRIB domain in the interval 133 to 150 (ISMPQDFRPVSSIIDVDI). The 94-residue stretch at 157–250 (RVRLYKYGTE…NLIITVRPAN (94 aa)) folds into the PDZ domain. Polar residues predominate over residues 253-272 (NNVVRNSRTSGSSGQSTDNS). The disordered stretch occupies residues 253 to 292 (NNVVRNSRTSGSSGQSTDNSLLGYPQQIEPSFEPEDEDSE).

Belongs to the PAR6 family. As to quaternary structure, interacts with PARD3. Interacts with GTP-bound forms of CDC42 and RAC1. Interacts with GTP-bound RHOQ/TC10. Interacts with PALS1. Interacts with the N-terminal part of PRKCI and PRKCZ. Part of a complex with PARD3, CDC42 or RAC1 and PRKCI or PRKCZ. Part of a complex with LLGL1 and PRKCI. Interacts with PARD3B. Interacts with ECT2. In terms of tissue distribution, expressed in pancreas and in both adult and fetal kidney. Weakly expressed in placenta and lung. Not expressed in other tissues.

The protein resides in the cytoplasm. Its subcellular location is the cell membrane. It localises to the cell junction. It is found in the tight junction. Functionally, adapter protein involved in asymmetrical cell division and cell polarization processes. Probably involved in formation of epithelial tight junctions. Association with PARD3 may prevent the interaction of PARD3 with F11R/JAM1, thereby preventing tight junction assembly. The PARD6-PARD3 complex links GTP-bound Rho small GTPases to atypical protein kinase C proteins. This chain is Partitioning defective 6 homolog beta (PARD6B), found in Homo sapiens (Human).